A 340-amino-acid polypeptide reads, in one-letter code: Dihydroorotate dehydrogenase (quinone) (340 aa).

FMN is bound by residues 63–67 (AGLDK) and Thr87. Lys67 contacts substrate. 112–116 (NRMGF) is a binding site for substrate. Residues Asn140 and Asn173 each coordinate FMN. A substrate-binding site is contributed by Asn173. Ser176 serves as the catalytic Nucleophile. Substrate is bound at residue Asn178. 2 residues coordinate FMN: Lys218 and Thr246. 247–248 (NT) lines the substrate pocket. Residues Gly269, Gly298, and 319–320 (YT) each bind FMN.

It belongs to the dihydroorotate dehydrogenase family. Type 2 subfamily. As to quaternary structure, monomer. It depends on FMN as a cofactor.

It is found in the cell membrane. The catalysed reaction is (S)-dihydroorotate + a quinone = orotate + a quinol. Its pathway is pyrimidine metabolism; UMP biosynthesis via de novo pathway; orotate from (S)-dihydroorotate (quinone route): step 1/1. Its function is as follows. Catalyzes the conversion of dihydroorotate to orotate with quinone as electron acceptor. This is Dihydroorotate dehydrogenase (quinone) from Methylococcus capsulatus (strain ATCC 33009 / NCIMB 11132 / Bath).